The primary structure comprises 211 residues: Phosphoribosyl-dephospho-CoA transferase (211 aa).

Catalysis depends on residues aspartate 136 and aspartate 138.

Belongs to the MdcG family.

The enzyme catalyses apo-[malonate decarboxylase ACP] + 2'-(5''-triphospho-alpha-D-ribosyl)-3'-dephospho-CoA = holo-[malonate decarboxylase ACP] + diphosphate. Transfers 2'-(5-triphosphoribosyl)-3'-dephosphocoenzyme-A to the apo-[acyl-carrier-protein] of the malonate decarboxylase to yield holo-[acyl-carrier-protein]. The protein is Phosphoribosyl-dephospho-CoA transferase of Pseudomonas syringae pv. tomato (strain ATCC BAA-871 / DC3000).